Reading from the N-terminus, the 93-residue chain is SH3 domain-binding glutamic acid-rich-like protein 3 (93 aa).

The residue at position 2 (Ser2) is an N-acetylserine. Residues 2-93 (SGLRVYSTSV…DTLQEFLKLA (92 aa)) form the Glutaredoxin domain. Thr9 is a glycosylation site (O-linked (GalNAc...) threonine).

The protein belongs to the SH3BGR family. As to quaternary structure, homodimer. Interacts with MYO1C (via its IQ motifs); the interaction is dependent on calcium and takes place at membrane ruffles. In terms of processing, may be glycosylated.

The protein localises to the cytoplasm. Its subcellular location is the cytosol. It is found in the cell projection. The protein resides in the ruffle membrane. It localises to the nucleus. Functionally, could act as a modulator of glutaredoxin biological activity. May play a role in cytoskeleton organization. The polypeptide is SH3 domain-binding glutamic acid-rich-like protein 3 (Sh3bgrl3) (Mus musculus (Mouse)).